The primary structure comprises 152 residues: Deoxyuridine 5'-triphosphate nucleotidohydrolase (152 aa).

Residues 71–73 (RSG), Asn84, 88–90 (LID), and Met98 contribute to the substrate site.

Belongs to the dUTPase family. It depends on Mg(2+) as a cofactor.

It carries out the reaction dUTP + H2O = dUMP + diphosphate + H(+). Its pathway is pyrimidine metabolism; dUMP biosynthesis; dUMP from dCTP (dUTP route): step 2/2. Functionally, this enzyme is involved in nucleotide metabolism: it produces dUMP, the immediate precursor of thymidine nucleotides and it decreases the intracellular concentration of dUTP so that uracil cannot be incorporated into DNA. This chain is Deoxyuridine 5'-triphosphate nucleotidohydrolase, found in Photorhabdus laumondii subsp. laumondii (strain DSM 15139 / CIP 105565 / TT01) (Photorhabdus luminescens subsp. laumondii).